The primary structure comprises 267 residues: N-acetylgalactosamine permease IIC component 1 (267 aa).

Residues 1–10 (MHEITLLQGL) lie on the Periplasmic side of the membrane. The PTS EIIC type-4 domain maps to 1-237 (MHEITLLQGL…VAVLGAGFAV (237 aa)). Residues 11–31 (SLAALVFVLGIDFWLEALFLF) form a helical membrane-spanning segment. The Cytoplasmic segment spans residues 32–33 (RP). A helical membrane pass occupies residues 34 to 54 (IIVCTLTGAILGDIQTGLITG). The Periplasmic portion of the chain corresponds to 55–66 (GLTELAFAGLTP). The helical transmembrane segment at 67–87 (AGGVQPPNPIMAGLMTTVIAW) threads the bilayer. At 88 to 94 (STGVDAK) the chain is on the cytoplasmic side. A helical transmembrane segment spans residues 95–115 (TAIGLGLPFSLLMQYVILFFY). At 116–141 (SAFSLFMTKADKCAKEADTAAFSRLN) the chain is on the periplasmic side. A helical membrane pass occupies residues 142–162 (WTTMLIVASAYAVIAFLCTYL). Residues 163–177 (AQGAMQALVKAMPAW) lie on the Cytoplasmic side of the membrane. The chain crosses the membrane as a helical span at residues 178–198 (LTHGFEVAGGILPAVGFGLLL). The Periplasmic portion of the chain corresponds to 199–209 (RVMFKAQYIPY). The helical transmembrane segment at 210 to 230 (LIAGFLFVCYIQVSNLLPVAV) threads the bilayer. At 231-267 (LGAGFAVYEFFNAKSRQQAQPQPVASKNEEEDYSNGI) the chain is on the cytoplasmic side.

The protein resides in the cell inner membrane. Functionally, the phosphoenolpyruvate-dependent sugar phosphotransferase system (PTS), a major carbohydrate active -transport system, catalyzes the phosphorylation of incoming sugar substrates concomitant with their translocation across the cell membrane. This system is involved in N-acetylgalactosamine transport. This is N-acetylgalactosamine permease IIC component 1 (agaC) from Escherichia coli (strain K12).